Consider the following 226-residue polypeptide: Guanylate kinase (226 aa).

The Guanylate kinase-like domain occupies 13-193 (GLLLVLSAPS…ALAQLQAIVR (181 aa)). 20-27 (APSGAGKT) contributes to the ATP binding site.

The protein belongs to the guanylate kinase family.

Its subcellular location is the cytoplasm. It catalyses the reaction GMP + ATP = GDP + ADP. Its function is as follows. Essential for recycling GMP and indirectly, cGMP. This is Guanylate kinase from Anaeromyxobacter dehalogenans (strain 2CP-C).